The sequence spans 158 residues: Phosphopantetheine adenylyltransferase (158 aa).

Residue Ser8 participates in substrate binding. Residues 8–9 and His16 contribute to the ATP site; that span reads SF. Substrate contacts are provided by Lys40, Thr72, and Arg86. ATP-binding positions include 87 to 89, Glu97, and 122 to 128; these read GLR and HSFLSSS.

Belongs to the bacterial CoaD family. Homohexamer. Mg(2+) serves as cofactor.

Its subcellular location is the cytoplasm. It carries out the reaction (R)-4'-phosphopantetheine + ATP + H(+) = 3'-dephospho-CoA + diphosphate. The protein operates within cofactor biosynthesis; coenzyme A biosynthesis; CoA from (R)-pantothenate: step 4/5. Reversibly transfers an adenylyl group from ATP to 4'-phosphopantetheine, yielding dephospho-CoA (dPCoA) and pyrophosphate. The sequence is that of Phosphopantetheine adenylyltransferase from Prochlorococcus marinus (strain NATL2A).